The following is a 684-amino-acid chain: UvrABC system protein C (684 aa).

The GIY-YIG domain maps to 16-95 (TDPGVYKFRD…IKRFDPRFNV (80 aa)). In terms of domain architecture, UVR spans 208–243 (APVRKRVTQRMEEAAENLEFELAARLRDDLGAIDKL). A compositionally biased stretch (basic and acidic residues) spans 332–352 (EAAEDAKLERRGVDQESHAEP). Positions 332-357 (EAAEDAKLERRGVDQESHAEPRQGNA) are disordered.

This sequence belongs to the UvrC family. Interacts with UvrB in an incision complex.

Its subcellular location is the cytoplasm. In terms of biological role, the UvrABC repair system catalyzes the recognition and processing of DNA lesions. UvrC both incises the 5' and 3' sides of the lesion. The N-terminal half is responsible for the 3' incision and the C-terminal half is responsible for the 5' incision. This is UvrABC system protein C from Corynebacterium aurimucosum (strain ATCC 700975 / DSM 44827 / CIP 107346 / CN-1) (Corynebacterium nigricans).